We begin with the raw amino-acid sequence, 246 residues long: Acetoacetate decarboxylase (246 aa).

Lys-115 serves as the catalytic Schiff-base intermediate with acetoacetate.

The protein belongs to the ADC family.

It catalyses the reaction acetoacetate + H(+) = acetone + CO2. In terms of biological role, catalyzes the conversion of acetoacetate to acetone and carbon dioxide. This is Acetoacetate decarboxylase from Clostridium beijerinckii (Clostridium MP).